Here is an 865-residue protein sequence, read N- to C-terminus: Cadherin-related family member 1 (865 aa).

Positions 1 to 23 are cleaved as a signal peptide; it reads MKHVRHFIPSLFLSLVHVCLVQA. The Extracellular segment spans residues 24-705; sequence NYAPYFFDNG…TKDNPMKALG (682 aa). Cadherin domains lie at 38-137, 138-249, 250-356, 362-475, 476-579, and 571-690; these read NGNM…SPEF, INTP…PPMF, IGTP…PPTF, PQNR…VPKF, SSDY…SPEF, and DVND…GPMA. Residues 706-726 form a helical membrane-spanning segment; it reads VLAGVMGIMVLITIMISTAMF. Residues 727 to 865 lie on the Cytoplasmic side of the membrane; that stretch reads WRNKRSNKIM…RNASMGEPHI (139 aa). Residues 782–810 form a disordered region; it reads ENSNNNVQAAPVPPAAPLPPPPPALAASG. A compositionally biased stretch (pro residues) spans 792 to 805; sequence PVPPAAPLPPPPPA.

The protein localises to the membrane. Potential calcium-dependent cell-adhesion protein. The polypeptide is Cadherin-related family member 1 (CDHR1) (Gallus gallus (Chicken)).